The sequence spans 259 residues: Small ribosomal subunit protein uS2 (259 aa).

The segment at 224-259 (GKQGEDDQQVAPAEDVAEEVSDESLQDLKNSVEGND) is disordered. Acidic residues predominate over residues 238 to 248 (DVAEEVSDESL). The span at 250–259 (DLKNSVEGND) shows a compositional bias: polar residues.

The protein belongs to the universal ribosomal protein uS2 family.

The sequence is that of Small ribosomal subunit protein uS2 from Limosilactobacillus fermentum (strain NBRC 3956 / LMG 18251) (Lactobacillus fermentum).